Reading from the N-terminus, the 377-residue chain is Cytochrome b (377 aa).

A run of 4 helical transmembrane segments spans residues 34-54, 78-100, 113-133, and 179-199; these read FGFLLGMCLSIQIFTGLFLSM, WLLRVLHANGGSMFFICLYIHIA, TWMTGVVLLILVMATAFLGYV, and FFTLHFILPFVVLAMVAIHLL. Heme b contacts are provided by H84 and H98. Residues H183 and H197 each contribute to the heme b site. H202 provides a ligand contact to a ubiquinone. The next 4 membrane-spanning stretches (helical) occupy residues 225–245, 288–308, 323–343, and 352–372; these read FTIKDLFGVVVMVWLLMILVL, KLGGVVALLASVVILIILPLY, MLFWGFISIFILLTWIGAQAI, and QILTSLYFFYFILSPLLSVLW.

It belongs to the cytochrome b family. The main subunits of complex b-c1 are: cytochrome b, cytochrome c1 and the Rieske protein. Heme b serves as cofactor.

The protein resides in the mitochondrion inner membrane. Functionally, component of the ubiquinol-cytochrome c reductase complex (complex III or cytochrome b-c1 complex) that is part of the mitochondrial respiratory chain. The b-c1 complex mediates electron transfer from ubiquinol to cytochrome c. Contributes to the generation of a proton gradient across the mitochondrial membrane that is then used for ATP synthesis. The polypeptide is Cytochrome b (mt:Cyt-b) (Priapulus caudatus (Priapulid worm)).